The following is a 560-amino-acid chain: Serine palmitoyltransferase 2 (560 aa).

A helical membrane pass occupies residues 65-85 (PMLVAVLTYVGYGVLTLFGYL). K377 carries the post-translational modification N6-(pyridoxal phosphate)lysine.

This sequence belongs to the class-II pyridoxal-phosphate-dependent aminotransferase family. Component of the serine palmitoyltransferase (SPT) complex, which is composed of SPTLC1, SPTLC2 or SPTLC3 and SPTSSA or SPTSSB. The heterodimer consisting of SPTLC1 and SPTLC2/SPTLC3 forms the catalytic core of the enzyme, while SPTSSA or SPTSSB subunits determine substrate specificity. SPT also interacts with ORMDL proteins, especially ORMDL3, which negatively regulate SPT activity in the presence of ceramides. Forms dimers of heterodimers with SPTLC1. It depends on pyridoxal 5'-phosphate as a cofactor.

The protein localises to the endoplasmic reticulum membrane. The catalysed reaction is L-serine + hexadecanoyl-CoA + H(+) = 3-oxosphinganine + CO2 + CoA. It catalyses the reaction octadecanoyl-CoA + L-serine + H(+) = 3-oxoeicosasphinganine + CO2 + CoA. It participates in lipid metabolism; sphingolipid metabolism. With respect to regulation, SPT complex catalytic activity is negatively regulated by ORMDL proteins, including ORMDL3, in the presence of ceramides. This mechanism allows to maintain ceramide levels at sufficient concentrations for the production of complex sphingolipids, but which prevents the accumulation of ceramides to levels that trigger apoptosis. In terms of biological role, component of the serine palmitoyltransferase multisubunit enzyme (SPT) that catalyzes the initial and rate-limiting step in sphingolipid biosynthesis by condensing L-serine and activated acyl-CoA (most commonly palmitoyl-CoA) to form long-chain bases. The SPT complex is composed of SPTLC1, SPTLC2 or SPTLC3 and SPTSSA or SPTSSB. Within this complex, the heterodimer consisting of SPTLC1 and SPTLC2/SPTLC3 forms the catalytic core. The composition of the serine palmitoyltransferase (SPT) complex determines the substrate preference. The SPTLC1-SPTLC2-SPTSSA complex shows a strong preference for C16-CoA substrate, while the SPTLC1-SPTLC3-SPTSSA isozyme uses both C14-CoA and C16-CoA as substrates, with a slight preference for C14-CoA. The SPTLC1-SPTLC2-SPTSSB complex shows a strong preference for C18-CoA substrate, while the SPTLC1-SPTLC3-SPTSSB isozyme displays an ability to use a broader range of acyl-CoAs, without apparent preference. Crucial for adipogenesis. The chain is Serine palmitoyltransferase 2 (SPTLC2) from Cricetulus griseus (Chinese hamster).